The primary structure comprises 482 residues: Pyruvate kinase (482 aa).

Arginine 37 contacts substrate. 3 residues coordinate K(+): asparagine 39, serine 41, and aspartate 71. Asparagine 39–histidine 42 contacts ATP. Arginine 78 and lysine 160 together coordinate ATP. Glutamate 222 contributes to the Mg(2+) binding site. 3 residues coordinate substrate: glycine 245, aspartate 246, and threonine 278. Mg(2+) is bound at residue aspartate 246.

This sequence belongs to the pyruvate kinase family. In terms of assembly, homotetramer. The cofactor is Mg(2+). It depends on K(+) as a cofactor.

It carries out the reaction pyruvate + ATP = phosphoenolpyruvate + ADP + H(+). The protein operates within carbohydrate degradation; glycolysis; pyruvate from D-glyceraldehyde 3-phosphate: step 5/5. The sequence is that of Pyruvate kinase (ttuE) from Agrobacterium vitis (Rhizobium vitis).